The primary structure comprises 431 residues: Teosinte glume architecture 1 (431 aa).

Disordered stretches follow at residues 18–55 and 68–102; these read QDHA…GAPA and ECEP…QQCP. A compositionally biased stretch (low complexity) spans 21–41; sequence AAAAPSSGGHAANAAAAGTGT. The SBP-type zinc finger occupies 101–178; the sequence is CPSCAVDGCR…DGHNRRRRKP (78 aa). Positions 104, 109, 126, 129, 145, 148, 152, and 164 each coordinate Zn(2+). Residues 408 to 419 show a composition bias toward gly residues; the sequence is GGGSGGGEGSSD. A disordered region spans residues 408–431; sequence GGGSGGGEGSSDGGTSSSMPFSWQ.

In terms of assembly, monomer and homodimer. As to expression, strongly expressed in immature ears and weakly in husks. Found in the inflorescence meristem of the developing ear, in the spikelet pair primordia, the glume primordia, the cupule forming region and other floral organs. Not detected in other tissues.

Its function is as follows. SBP transcriptional regulator probably involved in the domestication of maize. Acts as a transcriptional repressor binding to a 5'-GTAC-3' motif. May repress the growth of lateral branches in length and numbers. The polypeptide is Teosinte glume architecture 1 (Zea mays (Maize)).